A 357-amino-acid polypeptide reads, in one-letter code: Arginine kinase Scy p 2.0101 (357 aa).

One can recognise a Phosphagen kinase N-terminal domain in the interval 9–91 (KLEEGFKKLE…FDPIIEDYHK (83 aa)). 64–68 (GVGVY) serves as a coordination point for L-arginine. 2 igE-binding and beta-hexosaminidase release from rat basophilic leukemia (RBL) cells regions span residues 113–127 (VDPD…RVRC) and 127–155 (CGRS…VSST). In terms of domain architecture, Phosphagen kinase C-terminal spans 119 to 356 (FVISTRVRCG…LELIKIEKEM (238 aa)). 122–126 (STRVR) serves as a coordination point for ATP. His-185 lines the ATP pocket. Residues Cys-201 and Cys-271 are joined by a disulfide bond. Residues 204–218 (WPTGRGIYHNDNKTF) form an igE-binding and beta-hexosaminidase release from rat basophilic leukemia (RBL) cells region. The segment at 211-225 (YHNDNKTFLVWCNEE) is igE-binding, but no beta-hexosaminidase release from rat basophilic leukemia (RBL) cells. Glu-225 provides a ligand contact to L-arginine. ATP is bound at residue Arg-229. Cys-271 contributes to the L-arginine binding site. Residues 280–284 (RASVH) and 309–314 (RGTRGE) each bind ATP. Glu-314 contacts L-arginine. The igE-binding, but no beta-hexosaminidase release from rat basophilic leukemia (RBL) cells stretch occupies residues 316–330 (TEAEGGVYDISNKRR).

It belongs to the ATP:guanido phosphotransferase family. Glycosylated. As to expression, muscle (at protein level).

The catalysed reaction is L-arginine + ATP = N(omega)-phospho-L-arginine + ADP + H(+). Catalyzes the reversible transfer of high energy ATP gamma-phosphate group to L-arginine. The chain is Arginine kinase Scy p 2.0101 from Scylla paramamosain (Mud crab).